We begin with the raw amino-acid sequence, 312 residues long: Apolipoprotein E (312 aa).

The N-terminal stretch at 1 to 18 is a signal peptide; sequence MKALWAVLLATLLTGCLA. Repeat copies occupy residues 72-93, 94-115, 116-137, 138-159, 160-181, 182-203, 204-225, and 226-247. An 8 X 22 AA approximate tandem repeats region spans residues 72 to 247; it reads VLMEDTMTEV…RLEEMREHME (176 aa). Met-135 is modified (methionine sulfoxide). The LDL and other lipoprotein receptors binding stretch occupies residues 150-160; that stretch reads HLRKMRKRLMR. The tract at residues 150–160 is LDL receptor binding; it reads HLRKMRKRLMR. Residue 154–157 participates in heparin binding; it reads MRKR. Residues 202–282 are lipid-binding and lipoprotein association; sequence TANLGAGAAQ…SWFEPLVEDM (81 aa). Position 221–228 (221–228) interacts with heparin; it reads SERLRGRL. The homooligomerization stretch occupies residues 258–312; sequence QQIRLQAEIFQARLKSWFEPLVEDMHRQLANLVEKIQSSVATNSVLSTSVPQENQ. Residues 270-282 are specificity for association with VLDL; the sequence is RLKSWFEPLVEDM.

The protein belongs to the apolipoprotein A1/A4/E family. Homotetramer. May interact with ABCA1; functionally associated with ABCA1 in the biogenesis of HDLs. May interact with APP/A4 amyloid-beta peptide; the interaction is extremely stable in vitro but its physiological significance is unclear. May interact with MAPT. May interact with MAP2. In the cerebrospinal fluid, interacts with secreted SORL1. Interacts with PMEL; this allows the loading of PMEL luminal fragment on ILVs to induce fibril nucleation. Post-translationally, APOE exists as multiple glycosylated and sialylated glycoforms within cells and in plasma. The extent of glycosylation and sialylation are tissue and context specific. Glycated in plasma VLDL. In terms of processing, phosphorylated by FAM20C in the extracellular medium.

The protein localises to the secreted. It is found in the extracellular space. It localises to the extracellular matrix. Its subcellular location is the extracellular vesicle. The protein resides in the endosome. The protein localises to the multivesicular body. APOE is an apolipoprotein, a protein associating with lipid particles, that mainly functions in lipoprotein-mediated lipid transport between organs via the plasma and interstitial fluids. APOE is a core component of plasma lipoproteins and is involved in their production, conversion and clearance. Apolipoproteins are amphipathic molecules that interact both with lipids of the lipoprotein particle core and the aqueous environment of the plasma. As such, APOE associates with chylomicrons, chylomicron remnants, very low density lipoproteins (VLDL) and intermediate density lipoproteins (IDL) but shows a preferential binding to high-density lipoproteins (HDL). It also binds a wide range of cellular receptors including the LDL receptor/LDLR, the LDL receptor-related proteins LRP1, LRP2 and LRP8 and the very low-density lipoprotein receptor/VLDLR that mediate the cellular uptake of the APOE-containing lipoprotein particles. Finally, APOE also has a heparin-binding activity and binds heparan-sulfate proteoglycans on the surface of cells, a property that supports the capture and the receptor-mediated uptake of APOE-containing lipoproteins by cells. A main function of APOE is to mediate lipoprotein clearance through the uptake of chylomicrons, VLDLs, and HDLs by hepatocytes. APOE is also involved in the biosynthesis by the liver of VLDLs as well as their uptake by peripheral tissues ensuring the delivery of triglycerides and energy storage in muscle, heart and adipose tissues. By participating in the lipoprotein-mediated distribution of lipids among tissues, APOE plays a critical role in plasma and tissues lipid homeostasis. APOE is also involved in two steps of reverse cholesterol transport, the HDLs-mediated transport of cholesterol from peripheral tissues to the liver, and thereby plays an important role in cholesterol homeostasis. First, it is functionally associated with ABCA1 in the biogenesis of HDLs in tissues. Second, it is enriched in circulating HDLs and mediates their uptake by hepatocytes. APOE also plays an important role in lipid transport in the central nervous system, regulating neuron survival and sprouting. This chain is Apolipoprotein E (Apoe), found in Arvicanthis niloticus (African grass rat).